Consider the following 96-residue polypeptide: MSAVTVNDDGLVLRLYIQPKASRDSIVGLHGDEVKVAITAPPVDGQANSHLVKFLGKQFRVAKSQVVIEKGELGRHKQIKIINPQQIPPEIAALIN.

Belongs to the UPF0235 family.

This is UPF0235 protein YggU from Shigella flexneri.